A 675-amino-acid polypeptide reads, in one-letter code: NADH-ubiquinone oxidoreductase chain 5 (675 aa).

The next 19 helical transmembrane spans lie at 3-23 (LLPL…GKFL), 27-47 (VLFV…WIFY), 75-95 (FLFD…SLLV), 108-127 (HIIR…LMLV), 132-154 (FVQL…NFWY), 177-197 (IYFS…GVVF), 211-231 (FLGF…LGAI), 251-271 (TPVS…FVLI), 284-304 (LFLV…VGLV), 311-329 (VIAY…ACGM), 334-354 (VGLF…LGAG), 380-400 (YVAI…TGFY), 413-433 (FSIN…ITSF), 462-482 (SFIF…GFIF), 519-539 (LIPL…YFVI), 564-584 (YFDL…FYLL), 593-613 (LIEL…SIIF), 624-644 (YIFV…SLFF), and 649-669 (SFFN…LSFG).

The protein belongs to the complex I subunit 5 family.

It is found in the mitochondrion inner membrane. It carries out the reaction a ubiquinone + NADH + 5 H(+)(in) = a ubiquinol + NAD(+) + 4 H(+)(out). Core subunit of the mitochondrial membrane respiratory chain NADH dehydrogenase (Complex I) that is believed to belong to the minimal assembly required for catalysis. Complex I functions in the transfer of electrons from NADH to the respiratory chain. The immediate electron acceptor for the enzyme is believed to be ubiquinone. This chain is NADH-ubiquinone oxidoreductase chain 5 (ND5), found in Acanthamoeba castellanii (Amoeba).